The sequence spans 206 residues: MQGVIRSFVSGGNVVKGSVLQHLRVINPAIQPSVFCSRSESTQPARMEESGFESTTISDVMKSKGKSADGSWLWCTTDDTVYDAVKSMTQHNVGALVVVKPGEQQALAGIITERDYLRKIIVQGRSSKSTKVGDIMTEENKLITVTPETKVLRAMQLMTDNRIRHIPVIKDKGMIGMVSIGDVVRAVVHEHREELQRLNAYIQGGY.

A mitochondrion-targeting transit peptide spans 1–39; sequence MQGVIRSFVSGGNVVKGSVLQHLRVINPAIQPSVFCSRS. CBS domains are found at residues 61–127 and 136–194; these read MKSK…GRSS and MTEE…HREE.

It localises to the mitochondrion. This Arabidopsis thaliana (Mouse-ear cress) protein is CBS domain-containing protein CBSX3, mitochondrial (CBSX3).